A 304-amino-acid polypeptide reads, in one-letter code: Acetylglutamate kinase (304 aa).

Substrate is bound by residues 82–83, Arg104, and Asn197; that span reads GG.

It belongs to the acetylglutamate kinase family. ArgB subfamily.

The protein resides in the cytoplasm. The catalysed reaction is N-acetyl-L-glutamate + ATP = N-acetyl-L-glutamyl 5-phosphate + ADP. It functions in the pathway amino-acid biosynthesis; L-arginine biosynthesis; N(2)-acetyl-L-ornithine from L-glutamate: step 2/4. In terms of biological role, catalyzes the ATP-dependent phosphorylation of N-acetyl-L-glutamate. In Prochlorococcus marinus (strain NATL2A), this protein is Acetylglutamate kinase.